Consider the following 603-residue polypeptide: Geraniol synthase, chloroplastic (603 aa).

A chloroplast-targeting transit peptide spans 1-35; that stretch reads MSSISQKVVIGLNKAAANNNLQNLDRRGFKTRCVS. (2E)-geranyl diphosphate contacts are provided by arginine 319, aspartate 356, aspartate 360, arginine 497, and aspartate 500. Mg(2+) contacts are provided by aspartate 356 and aspartate 360. The DDXXD motif signature appears at 356-360; that stretch reads DDVYD. Residues aspartate 500, threonine 504, and glutamate 508 each coordinate Mg(2+).

It belongs to the terpene synthase family. Tpsb subfamily. In terms of assembly, monomer. Requires Mg(2+) as cofactor. Mn(2+) is required as a cofactor.

The protein localises to the plastid. The protein resides in the chloroplast. It catalyses the reaction (2E)-geranyl diphosphate + H2O = (2E)-geraniol + diphosphate. Its pathway is secondary metabolite biosynthesis; terpenoid biosynthesis. Monoterpene synthase (mono-TPS) involved in the biosynthesis of monoterpenes natural products. Catalyzes the conversion of (2E)-geranyl diphosphate (GPP) into geraniol. In Perilla frutescens var. hirtella (Perilla citriodora), this protein is Geraniol synthase, chloroplastic.